A 361-amino-acid chain; its full sequence is MNQGANKTVLDRYLRLDIPDQKCQAMYIWVDGTGENLRSKTRTLNFTPKSPSELPIWNFDGSSTGQAERSNSDVYLYPVAVYRDPFRLGNNKLVLCETYKYNKKPADTNQRWKCMEVMTRAADQHPWFGMEQEYTLLDIDKHPLGWPKNGYPGPQGPYYCGVGANRVYGRDVVEAHYRACLCAGINISGENAKVMPAQWEFQVGPCEGITMGDDLWMARYLLHRVAEDFDVVVTLDPKPIPGDWNGAGMHTNFSTEAMRGPNGILEIESAIDKLSKVHEKHIKAYDPHAGKDNERRLTGHYETSSIHDFSAGVANRGASIRIPRGVAEEKTGYLEDRRPSSNADPYVVSERLVRTICLNEQ.

The GS beta-grasp domain occupies 23 to 103 (CQAMYIWVDG…VLCETYKYNK (81 aa)). In terms of domain architecture, GS catalytic spans 110-361 (QRWKCMEVMT…LVRTICLNEQ (252 aa)). Glu131 is an ATP binding site. Mn(2+)-binding residues include Glu131, Glu133, and Glu200. 200–205 (EFQVGP) serves as a coordination point for ATP. 243–244 (DW) contributes to the L-glutamate binding site. Residue His250 coordinates Mn(2+). Residues 252 to 254 (NFS), Arg316, and Arg321 contribute to the ATP site. Arg316 contributes to the L-glutamate binding site. An ADP-binding site is contributed by 333-335 (YLE). Glu335 provides a ligand contact to Mn(2+). An L-glutamate-binding site is contributed by Arg337.

This sequence belongs to the glutamine synthetase family. Mg(2+) serves as cofactor. It depends on Mn(2+) as a cofactor.

Its subcellular location is the cytoplasm. The protein resides in the cytosol. It localises to the microsome. The protein localises to the mitochondrion. The catalysed reaction is L-glutamate + NH4(+) + ATP = L-glutamine + ADP + phosphate + H(+). In terms of biological role, glutamine synthetase that catalyzes the ATP-dependent conversion of glutamate and ammonia to glutamine. The protein is Glutamine synthetase of Panulirus argus (Caribbean spiny lobster).